The primary structure comprises 546 residues: Delta-1-pyrroline-5-carboxylate dehydrogenase (546 aa).

279–284 serves as a coordination point for NAD(+); the sequence is KDISSN. Glu297 acts as the Proton acceptor in catalysis. Cys331 serves as the catalytic Nucleophile.

This sequence belongs to the aldehyde dehydrogenase family.

The protein localises to the cytoplasm. The catalysed reaction is L-glutamate 5-semialdehyde + NAD(+) + H2O = L-glutamate + NADH + 2 H(+). The protein operates within amino-acid degradation; L-proline degradation into L-glutamate; L-glutamate from L-proline: step 2/2. The polypeptide is Delta-1-pyrroline-5-carboxylate dehydrogenase (pruA) (Agaricus bisporus (White button mushroom)).